Consider the following 407-residue polypeptide: Glycolate oxidase iron-sulfur subunit (407 aa).

4Fe-4S ferredoxin-type domains are found at residues 14–47 (RALE…ELDG) and 66–95 (LKTQ…HNLL). Residues cysteine 25, cysteine 28, cysteine 31, cysteine 35, cysteine 75, cysteine 78, cysteine 81, and cysteine 85 each contribute to the [4Fe-4S] cluster site.

In terms of assembly, the glycolate oxidase likely consists of three subunits, GlcD, GlcE and GlcF. [4Fe-4S] cluster serves as cofactor.

It localises to the cell inner membrane. The enzyme catalyses glycolate + A = glyoxylate + AH2. The catalysed reaction is (R)-lactate + A = pyruvate + AH2. In vitro the glycolate oxidase activity is inhibited by the sulfhydryl inhibitors CuSO4 and PCMB, by KCN, but not by the metal complexing agent EDTA. In terms of biological role, component of a complex that catalyzes the oxidation of glycolate to glyoxylate. Is required for E.coli to grow on glycolate as a sole source of carbon. Is also able to oxidize D-lactate ((R)-lactate) with a similar rate. Does not link directly to O(2), and 2,6-dichloroindophenol (DCIP) and phenazine methosulfate (PMS) can act as artificial electron acceptors in vitro, but the physiological molecule that functions as a primary electron acceptor during glycolate oxidation is unknown. The sequence is that of Glycolate oxidase iron-sulfur subunit from Escherichia coli (strain K12).